The primary structure comprises 377 residues: Homoserine O-succinyltransferase (377 aa).

Residues 50–358 (NAVLICHALS…PSSYGHDSFL (309 aa)) form the AB hydrolase-1 domain. The active-site Nucleophile is the S156. R226 contributes to the substrate binding site. Active-site residues include D321 and H354. D355 serves as a coordination point for substrate.

The protein belongs to the AB hydrolase superfamily. MetX family. As to quaternary structure, homodimer.

Its subcellular location is the cytoplasm. The catalysed reaction is L-homoserine + succinyl-CoA = O-succinyl-L-homoserine + CoA. The protein operates within amino-acid biosynthesis; L-methionine biosynthesis via de novo pathway; O-succinyl-L-homoserine from L-homoserine: step 1/1. Functionally, transfers a succinyl group from succinyl-CoA to L-homoserine, forming succinyl-L-homoserine. In Nitrosomonas europaea (strain ATCC 19718 / CIP 103999 / KCTC 2705 / NBRC 14298), this protein is Homoserine O-succinyltransferase.